A 1544-amino-acid polypeptide reads, in one-letter code: Transcriptional activator GLI3 (1544 aa).

Polar residues-rich tracts occupy residues 1 to 10 (MEAQSHSSTT) and 402 to 429 (NPVQ…SSTG). Disordered regions lie at residues 1–83 (MEAQ…EERA) and 373–477 (SAFG…QEPE). Residues 463–476 (VKEEGDKDESKQEP) show a composition bias toward basic and acidic residues. The C2H2-type 1 zinc-finger motif lies at 482-509 (TNCHWEGCSREFDTQEQLVHHINNDHIH). A C2H2-type 2; degenerate zinc finger spans residues 520 to 542 (LDCSREQKPFKAQYMLVVHMRRH). C2H2-type zinc fingers lie at residues 548–572 (HKCT…LRSH), 578–603 (YVCE…NRTH), and 609–634 (YVCK…KTVH). 4 disordered regions span residues 622 to 728 (DPSS…YSNN), 865 to 919 (RSSG…DLPS), 1126 to 1155 (SVVL…VSKS), and 1327 to 1368 (HYQG…GNQS). Residues 634-650 (HGPEAHVTKKQRGDIHP) show a composition bias toward basic and acidic residues. The span at 660-685 (SHSQTRSPGQQTQGATGEQKDLNSTT) shows a compositional bias: polar residues. Basic and acidic residues predominate over residues 686–701 (SRREECLQVKAVKSEK). The segment covering 702 to 728 (PMTSQPSPGGQSTCSSEQSPISNYSNN) has biased composition (polar residues). The segment covering 865-882 (RSSGISPCFSSRRSSDAS) has biased composition (low complexity). Residues 1330 to 1355 (GVNQSSPMTLGQVSPTSQSSLHQGPQ) are compositionally biased toward polar residues.

Belongs to the GLI C2H2-type zinc-finger protein family. Post-translationally, phosphorylation is essential for its proteolytic processing. In terms of processing, the repressor form (GLI3R), a C-terminally truncated form is generated from the full-length GLI3 protein (GLI3FL) through proteolytic processing.

It localises to the nucleus. The protein resides in the cytoplasm. In terms of biological role, has a dual function as a transcriptional activator and a repressor of the sonic hedgehog (Shh) pathway, and plays a role in limb development. The full-length GLI3 form (GLI3FL) acts as an activator (GLI3A) while GLI3R, its C-terminally truncated form, acts as a repressor. The polypeptide is Transcriptional activator GLI3 (GLI3) (Gallus gallus (Chicken)).